The chain runs to 344 residues: Ferredoxin--NADP reductase (344 aa).

FAD is bound by residues Asp36, Gln44, Tyr49, Val89, Phe127, Asp291, and Thr332.

It belongs to the ferredoxin--NADP reductase type 2 family. Homodimer. FAD serves as cofactor.

It carries out the reaction 2 reduced [2Fe-2S]-[ferredoxin] + NADP(+) + H(+) = 2 oxidized [2Fe-2S]-[ferredoxin] + NADPH. This is Ferredoxin--NADP reductase from Beijerinckia indica subsp. indica (strain ATCC 9039 / DSM 1715 / NCIMB 8712).